Reading from the N-terminus, the 138-residue chain is MSTDSIVKASNWRLVEVGRVVLIKKGQSAGKLAAIVEIIDQKKVLIDGPKAGVPRQAINLGQVVLTPLTFALPRGARTATVSKKWAAAGVCEKWAASSWAKKIAQRERRAALTDFERFQVMVLRKQKRYTVKKALAKA.

The residue at position 2 (Ser-2) is an N-acetylserine.

Belongs to the eukaryotic ribosomal protein eL14 family. In terms of assembly, component of the large ribosomal subunit (LSU). Mature yeast ribosomes consist of a small (40S) and a large (60S) subunit. The 40S small subunit contains 1 molecule of ribosomal RNA (18S rRNA) and 33 different proteins (encoded by 57 genes). The large 60S subunit contains 3 rRNA molecules (25S, 5.8S and 5S rRNA) and 46 different proteins (encoded by 81 genes). N-terminally acetylated by acetyltransferase NatA.

The protein resides in the cytoplasm. Its function is as follows. Component of the ribosome, a large ribonucleoprotein complex responsible for the synthesis of proteins in the cell. The small ribosomal subunit (SSU) binds messenger RNAs (mRNAs) and translates the encoded message by selecting cognate aminoacyl-transfer RNA (tRNA) molecules. The large subunit (LSU) contains the ribosomal catalytic site termed the peptidyl transferase center (PTC), which catalyzes the formation of peptide bonds, thereby polymerizing the amino acids delivered by tRNAs into a polypeptide chain. The nascent polypeptides leave the ribosome through a tunnel in the LSU and interact with protein factors that function in enzymatic processing, targeting, and the membrane insertion of nascent chains at the exit of the ribosomal tunnel. This Saccharomyces cerevisiae (strain ATCC 204508 / S288c) (Baker's yeast) protein is Large ribosomal subunit protein eL14B.